Here is an 839-residue protein sequence, read N- to C-terminus: Probable inorganic carbon transporter subunit DabA (839 aa).

Residues C353, D355, H537, and C552 each contribute to the Zn(2+) site.

This sequence belongs to the inorganic carbon transporter (TC 9.A.2) DabA family. Forms a complex with DabB. Zn(2+) serves as cofactor.

Its subcellular location is the cell membrane. Its function is as follows. Part of an energy-coupled inorganic carbon pump. This chain is Probable inorganic carbon transporter subunit DabA, found in Chloroflexus aggregans (strain MD-66 / DSM 9485).